Reading from the N-terminus, the 72-residue chain is uncharacterized protein (72 aa).

The first 17 residues, 1-17, serve as a signal peptide directing secretion; that stretch reads MSLGLAIAVGIVLGVVA.

This is an uncharacterized protein from Schizosaccharomyces pombe (strain 972 / ATCC 24843) (Fission yeast).